The sequence spans 365 residues: Forkhead box protein E4 (365 aa).

Over residues 1–13 the composition is skewed to basic and acidic residues; it reads MDSPDSVRVKCES. Positions 1-46 are disordered; that stretch reads MDSPDSVRVKCESKGSCSPEEGLNNGLPEEHNQASGGRRRKRPVQR. The fork-head DNA-binding region spans 48–142; it reads KPPYSYIALI…DNGSFLRRRK (95 aa).

As to expression, first expressed at the end of gastrulation (stage 13) in the anterior ectodermal placode. During intermediate neural plate stages (stages 14-16), expression expands to the presumptive nasal ectoderm (PNE) and the presumptive lens ectoderm (PLE). By stages 18-21, expression begins to deplete in the PNE, while intensifying in the PLE so that by late neural stages (stages 22), expression is restricted to the PLE. Throughout tailbud stages (stage 23-31), expression is maintained in the lens placode and lens vesicle. In the maturing lens (stage 32-onwards), expression is restricted to the anterior lens epithelium, where it remains during the tadpole stage. In tadpoles there is additional expression in the ventral midline of the pharynx. Expression continues in the adult eye.

It localises to the nucleus. Its function is as follows. Probable transcription factor. Mediates lens formation in the embryo by promoting the proliferation of the specified lens ectoderm and suppressing its terminal differentiation. This Xenopus laevis (African clawed frog) protein is Forkhead box protein E4.